Consider the following 503-residue polypeptide: Aromatase (503 aa).

2 consecutive transmembrane segments (helical) span residues E19–W39 and M303–A323. Positions 309 and 374 each coordinate substrate. Residue C437 coordinates heme.

It belongs to the cytochrome P450 family. It depends on heme as a cofactor. Post-translationally, phosphorylated in vitro by PKA and PKG/PRKG1. These phosphorylations inhibit the catalytic activity as measured by estrone synthesis from androstenedione (36% decrease for PKA and 30% for PKG/PRKG1). In terms of tissue distribution, widely expressed, including in adult and fetal brain, placenta, skin fibroblasts, adipose tissue and gonads.

It is found in the endoplasmic reticulum membrane. The protein localises to the microsome membrane. It catalyses the reaction testosterone + 3 reduced [NADPH--hemoprotein reductase] + 3 O2 = 17beta-estradiol + formate + 3 oxidized [NADPH--hemoprotein reductase] + 4 H2O + 4 H(+). The catalysed reaction is androst-4-ene-3,17-dione + 3 reduced [NADPH--hemoprotein reductase] + 3 O2 = estrone + formate + 3 oxidized [NADPH--hemoprotein reductase] + 4 H2O + 4 H(+). It carries out the reaction androst-4-ene-3,17-dione + reduced [NADPH--hemoprotein reductase] + O2 = 19-hydroxyandrost-4-ene-3,17-dione + oxidized [NADPH--hemoprotein reductase] + H2O + H(+). The enzyme catalyses 19-hydroxyandrost-4-ene-3,17-dione + reduced [NADPH--hemoprotein reductase] + O2 = 19-oxo-androst-4-ene-3,17-dione + oxidized [NADPH--hemoprotein reductase] + 2 H2O + H(+). It catalyses the reaction 19-oxo-androst-4-ene-3,17-dione + reduced [NADPH--hemoprotein reductase] + O2 = estrone + formate + oxidized [NADPH--hemoprotein reductase] + H2O + 2 H(+). The catalysed reaction is estrone + reduced [NADPH--hemoprotein reductase] + O2 = 2-hydroxyestrone + oxidized [NADPH--hemoprotein reductase] + H2O + H(+). It carries out the reaction 17beta-hydroxy-5alpha-androstan-3-one + reduced [NADPH--hemoprotein reductase] + O2 = 17beta,19-dihydroxy-3-oxo-5alpha-androstanone + oxidized [NADPH--hemoprotein reductase] + H2O + H(+). The enzyme catalyses 17beta,19-dihydroxy-3-oxo-5alpha-androstanone + reduced [NADPH--hemoprotein reductase] + O2 = 17beta-hydroxy-3,19-dioxo-5alpha-androstanone + oxidized [NADPH--hemoprotein reductase] + 2 H2O + H(+). It catalyses the reaction 17beta-hydroxy-3,19-dioxo-5alpha-androstanone + reduced [NADPH--hemoprotein reductase] + O2 = 17beta-hydroxy-3-oxo-19-nor-5alpha-androst-1-ene + formate + oxidized [NADPH--hemoprotein reductase] + H2O + 2 H(+). The protein operates within steroid hormone biosynthesis. In terms of biological role, a cytochrome P450 monooxygenase that catalyzes the conversion of C19 androgens, androst-4-ene-3,17-dione (androstenedione) and testosterone to the C18 estrogens, estrone and estradiol, respectively. Catalyzes three successive oxidations of C19 androgens: two conventional oxidations at C19 yielding 19-hydroxy and 19-oxo/19-aldehyde derivatives, followed by a third oxidative aromatization step that involves C1-beta hydrogen abstraction combined with cleavage of the C10-C19 bond to yield a phenolic A ring and formic acid. Alternatively, the third oxidative reaction yields a 19-norsteroid and formic acid. Converts dihydrotestosterone to delta1,10-dehydro 19-nordihydrotestosterone and may play a role in homeostasis of this potent androgen. Also displays 2-hydroxylase activity toward estrone. Mechanistically, uses molecular oxygen inserting one oxygen atom into a substrate, and reducing the second into a water molecule, with two electrons provided by NADPH via cytochrome P450 reductase (CPR; NADPH-ferrihemoprotein reductase). The polypeptide is Aromatase (Homo sapiens (Human)).